The sequence spans 73 residues: Translation initiation factor IF-1 (73 aa).

Residues 1-72 form the S1-like domain; it reads MAKEEAIEKD…SKGRIVYRYK (72 aa).

Belongs to the IF-1 family. In terms of assembly, component of the 30S ribosomal translation pre-initiation complex which assembles on the 30S ribosome in the order IF-2 and IF-3, IF-1 and N-formylmethionyl-tRNA(fMet); mRNA recruitment can occur at any time during PIC assembly.

Its subcellular location is the cytoplasm. One of the essential components for the initiation of protein synthesis. Stabilizes the binding of IF-2 and IF-3 on the 30S subunit to which N-formylmethionyl-tRNA(fMet) subsequently binds. Helps modulate mRNA selection, yielding the 30S pre-initiation complex (PIC). Upon addition of the 50S ribosomal subunit IF-1, IF-2 and IF-3 are released leaving the mature 70S translation initiation complex. The sequence is that of Translation initiation factor IF-1 from Salinibacter ruber (strain DSM 13855 / M31).